The following is a 162-amino-acid chain: Allophycocyanin alpha-B chain (162 aa).

Asn-71 bears the N4-methylasparagine mark. Cys-81 serves as a coordination point for (2R,3E)-phycocyanobilin.

This sequence belongs to the phycobiliprotein family. Post-translationally, contains one covalently linked phycocyanobilin chromophore.

The protein localises to the plastid. It is found in the cyanelle thylakoid membrane. In terms of biological role, allophycocyanin is a photosynthetic bile pigment-protein complex with maximum absorption at approximately 650 nanometers. The polypeptide is Allophycocyanin alpha-B chain (apcD) (Cyanophora paradoxa).